A 601-amino-acid polypeptide reads, in one-letter code: Aspartate--tRNA ligase (601 aa).

L-aspartate is bound at residue Glu183. The segment at 207 to 210 is aspartate; that stretch reads QIFK. Arg229 contacts L-aspartate. ATP-binding positions include 229–231 and Gln238; that span reads RDE. L-aspartate is bound at residue His457. Glu497 provides a ligand contact to ATP. An L-aspartate-binding site is contributed by Arg504. 549–552 lines the ATP pocket; it reads GIDR.

Belongs to the class-II aminoacyl-tRNA synthetase family. Type 1 subfamily. Homodimer.

It is found in the cytoplasm. It carries out the reaction tRNA(Asp) + L-aspartate + ATP = L-aspartyl-tRNA(Asp) + AMP + diphosphate. Functionally, catalyzes the attachment of L-aspartate to tRNA(Asp) in a two-step reaction: L-aspartate is first activated by ATP to form Asp-AMP and then transferred to the acceptor end of tRNA(Asp). In Leptospira interrogans serogroup Icterohaemorrhagiae serovar Lai (strain 56601), this protein is Aspartate--tRNA ligase.